A 162-amino-acid polypeptide reads, in one-letter code: SsrA-binding protein (162 aa).

Over residues 137 to 154 the composition is skewed to basic and acidic residues; sequence HDKREDTKAREWDREKAR. The tract at residues 137 to 162 is disordered; that stretch reads HDKREDTKAREWDREKARIMKNKHRG.

It belongs to the SmpB family.

The protein resides in the cytoplasm. In terms of biological role, required for rescue of stalled ribosomes mediated by trans-translation. Binds to transfer-messenger RNA (tmRNA), required for stable association of tmRNA with ribosomes. tmRNA and SmpB together mimic tRNA shape, replacing the anticodon stem-loop with SmpB. tmRNA is encoded by the ssrA gene; the 2 termini fold to resemble tRNA(Ala) and it encodes a 'tag peptide', a short internal open reading frame. During trans-translation Ala-aminoacylated tmRNA acts like a tRNA, entering the A-site of stalled ribosomes, displacing the stalled mRNA. The ribosome then switches to translate the ORF on the tmRNA; the nascent peptide is terminated with the 'tag peptide' encoded by the tmRNA and targeted for degradation. The ribosome is freed to recommence translation, which seems to be the essential function of trans-translation. The protein is SsrA-binding protein of Aeromonas salmonicida (strain A449).